The chain runs to 515 residues: 1-pyrroline-5-carboxylate dehydrogenase 2 (515 aa).

Active-site residues include glutamate 286 and cysteine 320.

The protein belongs to the aldehyde dehydrogenase family. RocA subfamily.

It carries out the reaction L-glutamate 5-semialdehyde + NAD(+) + H2O = L-glutamate + NADH + 2 H(+). The protein operates within amino-acid degradation; L-proline degradation into L-glutamate; L-glutamate from L-proline: step 2/2. The sequence is that of 1-pyrroline-5-carboxylate dehydrogenase 2 (rocA2) from Halalkalibacterium halodurans (strain ATCC BAA-125 / DSM 18197 / FERM 7344 / JCM 9153 / C-125) (Bacillus halodurans).